A 333-amino-acid chain; its full sequence is Anthranilate phosphoribosyltransferase (333 aa).

5-phospho-alpha-D-ribose 1-diphosphate-binding positions include Gly80, 83 to 84 (GD), Thr88, 90 to 93 (NLST), 108 to 116 (KHGNRSASG), and Ser120. Gly80 is an anthranilate binding site. Residue Ser92 participates in Mg(2+) binding. Position 111 (Asn111) interacts with anthranilate. Residue Arg166 coordinates anthranilate. Asp224 and Glu225 together coordinate Mg(2+).

This sequence belongs to the anthranilate phosphoribosyltransferase family. As to quaternary structure, homodimer. Mg(2+) serves as cofactor.

It catalyses the reaction N-(5-phospho-beta-D-ribosyl)anthranilate + diphosphate = 5-phospho-alpha-D-ribose 1-diphosphate + anthranilate. It participates in amino-acid biosynthesis; L-tryptophan biosynthesis; L-tryptophan from chorismate: step 2/5. In terms of biological role, catalyzes the transfer of the phosphoribosyl group of 5-phosphorylribose-1-pyrophosphate (PRPP) to anthranilate to yield N-(5'-phosphoribosyl)-anthranilate (PRA). This chain is Anthranilate phosphoribosyltransferase, found in Pyrobaculum aerophilum (strain ATCC 51768 / DSM 7523 / JCM 9630 / CIP 104966 / NBRC 100827 / IM2).